Consider the following 190-residue polypeptide: UPF0149 protein NT01EI_3357 (190 aa).

This sequence belongs to the UPF0149 family.

The chain is UPF0149 protein NT01EI_3357 from Edwardsiella ictaluri (strain 93-146).